Here is a 248-residue protein sequence, read N- to C-terminus: 23S rRNA (guanosine-2'-O-)-methyltransferase RlmB (248 aa).

Gly-200, Ile-220, and Leu-229 together coordinate S-adenosyl-L-methionine.

Belongs to the class IV-like SAM-binding methyltransferase superfamily. RNA methyltransferase TrmH family. RlmB subfamily.

It is found in the cytoplasm. It catalyses the reaction guanosine(2251) in 23S rRNA + S-adenosyl-L-methionine = 2'-O-methylguanosine(2251) in 23S rRNA + S-adenosyl-L-homocysteine + H(+). Functionally, specifically methylates the ribose of guanosine 2251 in 23S rRNA. The protein is 23S rRNA (guanosine-2'-O-)-methyltransferase RlmB of Acinetobacter baylyi (strain ATCC 33305 / BD413 / ADP1).